We begin with the raw amino-acid sequence, 1104 residues long: Collagenase ColA (1104 aa).

The signal sequence occupies residues 1-39; that stretch reads MKKNLKRGELTKLKLVERWSATFTLAAFILFNSSFKVLA. Residues 40 to 86 constitute a propeptide that is removed on maturation; the sequence is ADKKVENSNNGQITREINADQISKTELNNEVATDNNRPLGPSIAPSR. An S1 metalloprotease domain region spans residues 87–761; it reads ARNNKIYTFD…YVYDVVFHGM (675 aa). Positions 93 to 367 are activator domain; the sequence is YTFDELNRMN…AANDLDLNFG (275 aa). The catalytic subdomain stretch occupies residues 377-646; the sequence is DFNKIKADAR…MDSLLNNIDN (270 aa). Glu-477 provides a ligand contact to Ca(2+). Residue His-502 coordinates Zn(2+). The active site involves Glu-503. His-506 provides a ligand contact to Zn(2+). Residues Gly-510, Val-514, and Gly-516 each coordinate Ca(2+). Glu-534 contacts Zn(2+). Residues 654-767 are helper subdomain; the sequence is DEYVNGHEAK…FHGMNTDTNT (114 aa). The interval 762-860 is S2 domain; it reads NTDTNTDVHV…KKIKVVEDKP (99 aa). Residues Asn-772, Lys-773, Asp-800, Asp-802, Asp-841, Glu-866, Glu-868, Asn-870, Asp-894, Asp-897, Glu-993, Glu-995, Asn-997, Leu-1016, Asp-1020, Lys-1022, and Asp-1023 each contribute to the Ca(2+) site. Residues 774–862 form the PKD domain; sequence EPKAVIKSDS…IKVVEDKPVE (89 aa). The interval 865 to 979 is S3a collagen-binding domain; that stretch reads NESEPNNDFE…TYTVNVKGNL (115 aa). An S3b collagen-binding domain region spans residues 992 to 1104; that stretch reads KEVENNNDFD…GNYIVNLQNK (113 aa).

Belongs to the peptidase M9B family. Collagenase subfamily. The cofactor is Ca(2+). Zn(2+) is required as a cofactor.

It is found in the secreted. It carries out the reaction Digestion of native collagen in the triple helical region at Xaa-|-Gly bonds. With synthetic peptides, a preference is shown for Gly at P3 and P1', Pro and Ala at P2 and P2', and hydroxyproline, Ala or Arg at P3'.. In terms of biological role, clostridial collagenases are among the most efficient degraders of eukaryotic collagen known; saprophytes use collagen as a carbon source while pathogens additionally digest collagen to aid in host colonization. Has both tripeptidylcarboxypeptidase on Gly-X-Y and endopeptidase activities; the endopeptidase cuts within the triple helix region of collagen while tripeptidylcarboxypeptidase successively digests the exposed ends, thus clostridial collagenases can digest large sections of collagen. The protein is Collagenase ColA (colA) of Clostridium perfringens (strain 13 / Type A).